The following is a 397-amino-acid chain: Lysophospholipid transporter LplT (397 aa).

A run of 11 helical transmembrane segments spans residues 21–41 (SAQF…LALL), 53–73 (ILQM…GQVA), 91–111 (LGAA…LVGI), 139–159 (LMES…GVLA), 164–184 (LAAL…NLFI), 229–249 (WGAG…ALGI), 257–277 (YLNA…AKLV), 281–301 (TVRR…FFSL), 304–324 (ALLP…FFIV), 344–364 (IAVQ…LYSL), and 372–392 (VVGI…GLWI).

Belongs to the major facilitator superfamily. LplT (TC 2.A.1.42) family.

It is found in the cell inner membrane. In terms of biological role, catalyzes the facilitated diffusion of 2-acyl-glycero-3-phosphoethanolamine (2-acyl-GPE) into the cell. The sequence is that of Lysophospholipid transporter LplT from Enterobacter sp. (strain 638).